The primary structure comprises 420 residues: Lactosylceramide alpha-2,3-sialyltransferase (420 aa).

A disordered region spans residues 1 to 39 (MRKKAAGGAERRPLKPRTEAAAAAPAGRAMPSDHSRMKL). Residues 1-67 (MRKKAAGGAE…MRRPNLLLKD (67 aa)) are Cytoplasmic-facing. The span at 9 to 18 (AERRPLKPRT) shows a compositional bias: basic and acidic residues. Residues 20–29 (AAAAAPAGRA) are compositionally biased toward low complexity. Residues 68-88 (ILKCTLLLFGVWILFYILKLN) form a helical membrane-spanning segment. Topologically, residues 89 to 420 (HTTEECDMKR…DLSGGIHSEF (332 aa)) are lumenal. A disulfide bridge links Cys197 with Cys355. N-linked (GlcNAc...) asparagine glycosylation is present at Asn238.

This sequence belongs to the glycosyltransferase 29 family.

Its subcellular location is the golgi apparatus membrane. The enzyme catalyses a beta-D-Gal-(1-&gt;4)-beta-D-Glc-(1&lt;-&gt;1)-Cer(d18:1(4E)) + CMP-N-acetyl-beta-neuraminate = a ganglioside GM3 (d18:1(4E)) + CMP + H(+). It carries out the reaction ganglioside GA2 (d18:1(4E)/18:0) + CMP-N-acetyl-beta-neuraminate = ganglioside GM2 (d18:1(4E)/18:0) + CMP + H(+). It catalyses the reaction a beta-D-Gal-(1&lt;-&gt;1')-ceramide + CMP-N-acetyl-beta-neuraminate = N-acetyl-alpha-neuraminosyl-(2-&gt;3)-beta-D-galactosyl-(1&lt;-&gt;1')-ceramide + CMP + H(+). The catalysed reaction is ganglioside GA1 (d18:1(4E)/18:0) + CMP-N-acetyl-beta-neuraminate = ganglioside GM1 (d18:1(4E)/18:0) + CMP + H(+). Transfers the sialyl group (N-acetyl-alpha-neuraminyl or NeuAc) from CMP-NeuAc to the non-reducing terminal galactose (Gal) of glycosphingolipids forming gangliosides (important molecules involved in the regulation of multiple cellular processes, including cell proliferation and differentiation, apoptosis, embryogenesis, development, and oncogenesis). Mainly involved in the biosynthesis of ganglioside GM3 but can also use different glycolipids as substrate acceptors such as D-galactosylceramide (GalCer), asialo-GM2 (GA2) and asialo-GM1 (GA1), although less preferentially than beta-D-Gal-(1-&gt;4)-beta-D-Glc-(1&lt;-&gt;1)-Cer (LacCer). This Bos taurus (Bovine) protein is Lactosylceramide alpha-2,3-sialyltransferase (ST3GAL5).